The sequence spans 282 residues: Probable methylxanthine N7-demethylase NdmC (282 aa).

The enzyme catalyses 7-methylxanthine + NADPH + O2 + H(+) = xanthine + formaldehyde + NADP(+) + H2O. It catalyses the reaction 7-methylxanthine + NADH + O2 + H(+) = xanthine + formaldehyde + NAD(+) + H2O. In terms of biological role, involved in the caffeine degradation, which is the essential first step for assimilating the carbon and nitrogen in caffeine. Probably catalyzes the N7-demethylation of 7-methylxanthine to produce xanthine and formaldehyde. The sequence is that of Probable methylxanthine N7-demethylase NdmC from Pseudomonas sp. (strain TJI-51).